A 343-amino-acid chain; its full sequence is MRDELLNTPTDPLEEKFEEQIRPSRLEDFSGQQRLTDNLRIFIAAARQRGEALDHVLFSGPPGLGKTTLAHIIASELGGGLKITSGPLLDKPGNLAGLLTSLQKGDVLFIDEIHRLTPAVEEYLYSAMEDFRIDILLDSGPSARSVQLRLEPFTLVGATTRAGLLTSPLRARFGISNRLDYYSAELLQRIIIRTATILGIAIDQQAADEIARRSRGTPRIANRLLKRARDFTQVAQSSVISLELARKTLAALEIDEDGLDDMDKKIILSLLQKFDGGPVGISSLAVSVGEEHDTIEEVYEPYLIQTGFIARTPRGRVATKNAYRKFLGVLPGDDGPLFQKGSS.

The tract at residues 1 to 182 (MRDELLNTPT…FGISNRLDYY (182 aa)) is large ATPase domain (RuvB-L). ATP-binding positions include I21, R22, G63, K66, T67, T68, 129-131 (EDF), R172, Y182, and R219. T67 provides a ligand contact to Mg(2+). The segment at 183–253 (SAELLQRIII…LARKTLAALE (71 aa)) is small ATPAse domain (RuvB-S). Residues 256-343 (EDGLDDMDKK…DGPLFQKGSS (88 aa)) form a head domain (RuvB-H) region. DNA is bound by residues R311 and R316.

It belongs to the RuvB family. In terms of assembly, homohexamer. Forms an RuvA(8)-RuvB(12)-Holliday junction (HJ) complex. HJ DNA is sandwiched between 2 RuvA tetramers; dsDNA enters through RuvA and exits via RuvB. An RuvB hexamer assembles on each DNA strand where it exits the tetramer. Each RuvB hexamer is contacted by two RuvA subunits (via domain III) on 2 adjacent RuvB subunits; this complex drives branch migration. In the full resolvosome a probable DNA-RuvA(4)-RuvB(12)-RuvC(2) complex forms which resolves the HJ.

It is found in the cytoplasm. The enzyme catalyses ATP + H2O = ADP + phosphate + H(+). Functionally, the RuvA-RuvB-RuvC complex processes Holliday junction (HJ) DNA during genetic recombination and DNA repair, while the RuvA-RuvB complex plays an important role in the rescue of blocked DNA replication forks via replication fork reversal (RFR). RuvA specifically binds to HJ cruciform DNA, conferring on it an open structure. The RuvB hexamer acts as an ATP-dependent pump, pulling dsDNA into and through the RuvAB complex. RuvB forms 2 homohexamers on either side of HJ DNA bound by 1 or 2 RuvA tetramers; 4 subunits per hexamer contact DNA at a time. Coordinated motions by a converter formed by DNA-disengaged RuvB subunits stimulates ATP hydrolysis and nucleotide exchange. Immobilization of the converter enables RuvB to convert the ATP-contained energy into a lever motion, pulling 2 nucleotides of DNA out of the RuvA tetramer per ATP hydrolyzed, thus driving DNA branch migration. The RuvB motors rotate together with the DNA substrate, which together with the progressing nucleotide cycle form the mechanistic basis for DNA recombination by continuous HJ branch migration. Branch migration allows RuvC to scan DNA until it finds its consensus sequence, where it cleaves and resolves cruciform DNA. The chain is Holliday junction branch migration complex subunit RuvB from Prosthecochloris aestuarii (strain DSM 271 / SK 413).